Consider the following 69-residue polypeptide: MIYKIFYQKDFDQVPVRENTDSLYVEAESEADVRKKLSEKNYNLEFITPISGEFLAYEQQKEHFTVEKL.

The protein belongs to the RNA polymerase subunit epsilon family. RNAP is composed of a core of 2 alpha, a beta and a beta' subunit. The core is associated with a delta subunit, and at least one of epsilon or omega. When a sigma factor is associated with the core the holoenzyme is formed, which can initiate transcription.

It carries out the reaction RNA(n) + a ribonucleoside 5'-triphosphate = RNA(n+1) + diphosphate. In terms of biological role, a non-essential component of RNA polymerase (RNAP). This Halalkalibacterium halodurans (strain ATCC BAA-125 / DSM 18197 / FERM 7344 / JCM 9153 / C-125) (Bacillus halodurans) protein is DNA-directed RNA polymerase subunit epsilon.